The following is a 492-amino-acid chain: 2,3-bisphosphoglycerate-independent phosphoglycerate mutase (492 aa).

2 residues coordinate Mn(2+): Asp-11 and Ser-61. Ser-61 serves as the catalytic Phosphoserine intermediate. Residues His-118, 147–148 (RD), Arg-178, Arg-184, 248–251 (RNDR), and Lys-320 contribute to the substrate site. Positions 386, 390, 427, 428, and 445 each coordinate Mn(2+).

Belongs to the BPG-independent phosphoglycerate mutase family. In terms of assembly, monomer. Mn(2+) is required as a cofactor.

The catalysed reaction is (2R)-2-phosphoglycerate = (2R)-3-phosphoglycerate. It participates in carbohydrate degradation; glycolysis; pyruvate from D-glyceraldehyde 3-phosphate: step 3/5. Catalyzes the interconversion of 2-phosphoglycerate and 3-phosphoglycerate. In Campylobacter jejuni subsp. jejuni serotype O:6 (strain 81116 / NCTC 11828), this protein is 2,3-bisphosphoglycerate-independent phosphoglycerate mutase.